A 275-amino-acid chain; its full sequence is 2'-N-acetylparomamine deacetylase (275 aa).

His-14, Asp-17, and His-166 together coordinate Zn(2+).

Belongs to the PIGL family. It depends on Zn(2+) as a cofactor.

The catalysed reaction is 2'-N-acetylparomamine + H2O = paromamine + acetate. It participates in antibiotic biosynthesis; butirosin biosynthesis. In terms of biological role, deacetylase involved in the biosynthesis of butirosin by mediating deacetylation of 2'-N-acetylparomamine. In Niallia circulans (Bacillus circulans), this protein is 2'-N-acetylparomamine deacetylase (btrD).